The following is a 167-amino-acid chain: MNVNEIIKGPILTEKSYQLMSSGVYSFKVSPKTNRSETKKAVEYIFNVKVEKVNIFTVPKKEKKLGKSKGFTTKYKKALVKLMPGYTINLFEDESPQDQKDSETISENTDEKAKIAKKKAELEAKNKEIAEKLAKKQAELAKKESETNENQEKKIENQTENQENSAK.

The large ribosomal subunit protein uL23 stretch occupies residues 1–130 (MNVNEIIKGP…ELEAKNKEIA (130 aa)). Disordered regions lie at residues 91 to 112 (FEDE…TDEK) and 137 to 167 (QAEL…NSAK). 2 stretches are compositionally biased toward basic and acidic residues: residues 97 to 112 (QDQK…TDEK) and 137 to 157 (QAEL…KIEN). The unknown stretch occupies residues 131 to 167 (EKLAKKQAELAKKESETNENQEKKIENQTENQENSAK). A compositionally biased stretch (polar residues) spans 158-167 (QTENQENSAK).

Belongs to the universal ribosomal protein uL23 family. Part of the 50S ribosomal subunit. Contacts protein L29, and trigger factor when it is bound to the ribosome.

Functionally, one of the early assembly proteins it binds 23S rRNA. One of the proteins that surrounds the polypeptide exit tunnel on the outside of the ribosome. Forms the main docking site for trigger factor binding to the ribosome. The sequence is that of Large ribosomal subunit protein uL23 from Mesomycoplasma hyopneumoniae (strain 7448) (Mycoplasma hyopneumoniae).